Here is a 537-residue protein sequence, read N- to C-terminus: Cytochrome P450 monooxygenase AOL_s00215g282 (537 aa).

Residues 9–29 form a helical membrane-spanning segment; sequence ATVVLCGSIVTVSIAYVIFVV. The N-linked (GlcNAc...) asparagine glycan is linked to N126. Heme is bound at residue C451.

The protein belongs to the cytochrome P450 family. It depends on heme as a cofactor.

The protein resides in the membrane. The protein operates within secondary metabolite biosynthesis; terpenoid biosynthesis. Functionally, cytochrome P450 monooxygenase; part of the gene cluster that mediates the biosynthesis of sesquiterpenyl epoxy-cyclohexenoids (SECs) such as anthrobotrisins and arthrosporols, metabolites that possess a novel hybrid carbon skeleton consisting of a polyketide-derived epoxycyclohexenol combined with a terpenoid-derived monocyclic sesquiterpenol substructure (PKS-PTS hybrid). The SEC pathway plays an important role for fungal soil colonization via decreasing fungal nematode-capturing ability. Within the pathway, the cytochrome P450 monooxygenase AOL_s00215g282 acts as a m-cresol hydrolase that converts m-cresol to toluquinol. The pathway begins with the biosynthesis of 6-methylsalicylic acid (6-MSA), the first precursor of the polyketide-derived epoxycyclohexenol in arthrosporols, by the polyketide synthase (PKS) AOL_s00215g283 via condensation of 1 acetate and 3 malonate units. The 6-methylsalicylic acid decarboxylase AOL_s00215g281 then catalyzes the decarboxylation of 6-methylsalicylic acid to yield m-cresol. The cytochrome P450 monooxygenase AOL_s00215g282 further oxidizes m-cresol to yield toluquinol. With the assistance of the oxidoreductase AOL_s00215g277, the polyprenyl transferase AOL_s00215g276 catalyzes the farnesylation of toluquinol to produce farnesyl hydroquinone, the hybrid precursor for biosynthesis of SECs. Farnesyl hydroquinone undergoes epoxidation and then subsequent dehydrogenation to form farnesyl epoxy-quinone, the first and simplest SEC. The cytochrome P450 monooxygenase AOL_s00215g278 and the FAD-dependent monooxygenase AOL_s00215g279 might be involved in the oxygenation of the phenol moiety, most likely in the epoxy formation. The cytochrome P450 monooxygenases AOL_s00215g274 and AOL_s00215g280 are involved in specific regional ketone reductions at respectively C-4 and C-1 of farnesyl epoxy-quinone PubMed:33823587. This Arthrobotrys oligospora (strain ATCC 24927 / CBS 115.81 / DSM 1491) (Nematode-trapping fungus) protein is Cytochrome P450 monooxygenase AOL_s00215g282.